A 146-amino-acid polypeptide reads, in one-letter code: Small ribosomal subunit protein bS6 (146 aa).

Residues 106 to 146 are disordered; that stretch reads QAAATQRAAERRAQREAERNAAQAQSSASNQARTAATTSGK. The span at 113-124 shows a compositional bias: basic and acidic residues; it reads AAERRAQREAER. Positions 125 to 146 are enriched in low complexity; sequence NAAQAQSSASNQARTAATTSGK.

Belongs to the bacterial ribosomal protein bS6 family.

Functionally, binds together with bS18 to 16S ribosomal RNA. The chain is Small ribosomal subunit protein bS6 from Oenococcus oeni (strain ATCC BAA-331 / PSU-1).